The following is a 348-amino-acid chain: Rhodopsin (348 aa).

N-acetylmethionine is present on Met1. Topologically, residues Met1–Gln36 are extracellular. N-linked (GlcNAc...) asparagine glycans are attached at residues Asn2 and Asn15. Residues Phe37–Val61 form a helical membrane-spanning segment. The Cytoplasmic portion of the chain corresponds to Thr62 to Asn73. A helical transmembrane segment spans residues Tyr74–Tyr96. The Extracellular portion of the chain corresponds to Thr97–Cys110. Cysteines 110 and 187 form a disulfide. The chain crosses the membrane as a helical span at residues Asn111–Ile133. The 'Ionic lock' involved in activated form stabilization signature appears at Glu134–Tyr136. Residues Glu134–His152 are Cytoplasmic-facing. The helical transmembrane segment at Ala153–Val173 threads the bilayer. The Extracellular segment spans residues Gly174–Ser202. Glu201 contacts Zn(2+). The helical transmembrane segment at Phe203–Gly224 threads the bilayer. Topologically, residues Gln225–Arg252 are cytoplasmic. A helical membrane pass occupies residues Met253–Tyr274. Topologically, residues Ile275–Ile286 are extracellular. Gln279 provides a ligand contact to Zn(2+). A helical membrane pass occupies residues Phe287 to Met308. The residue at position 296 (Lys296) is an N6-(retinylidene)lysine. Residues Leu309 to Ala348 are Cytoplasmic-facing. 2 S-palmitoyl cysteine lipidation sites follow: Cys322 and Cys323. An interaction with SAG region spans residues Asp330–Ala348. Position 334 is a phosphoserine (Ser334). At Thr336 the chain carries Phosphothreonine. Ser338 carries the post-translational modification Phosphoserine. A phosphothreonine mark is found at Thr340 and Thr342. Residue Ser343 is modified to Phosphoserine.

This sequence belongs to the G-protein coupled receptor 1 family. Opsin subfamily. Homodimer. May form a complex composed of RHO, GRK1 and RCVRN in a Ca(2+)-dependent manner; RCVRN prevents the interaction between GRK1 and RHO. Interacts with GRK1. Interacts (phosphorylated form) with SAG. Interacts with GNAT1. Interacts with GNAT3. SAG and G-proteins compete for a common binding site. Interacts with PRCD; the interaction promotes PRCD stability. Forms a complex with ASAP1 and ARF4. Forms a complex with ASAP1, RAB11A, Rabin8/RAB3IP, ARF4 and RAB11FIP3; the complex regulates Golgi-to-cilia rhodopsin/RHO transport in photoreceptors. Post-translationally, phosphorylated on some or all of the serine and threonine residues present in the C-terminal region. In terms of processing, contains one covalently linked retinal chromophore. Upon light absorption, the covalently bound 11-cis-retinal is converted to all-trans-retinal. After hydrolysis of the Schiff base and release of the covalently bound all-trans-retinal, active rhodopsin is regenerated by binding of a fresh molecule of 11-cis-retinal. Rod-shaped photoreceptor cells in the retina (at protein level).

It is found in the membrane. The protein localises to the cell projection. It localises to the cilium. The protein resides in the photoreceptor outer segment. Its function is as follows. Photoreceptor required for image-forming vision at low light intensity. Required for photoreceptor cell viability after birth. Light-induced isomerization of 11-cis to all-trans retinal triggers a conformational change that activates signaling via G-proteins. Subsequent receptor phosphorylation mediates displacement of the bound G-protein alpha subunit by the arrestin SAG and terminates signaling. This chain is Rhodopsin (Rho), found in Mus musculus (Mouse).